Here is a 151-residue protein sequence, read N- to C-terminus: Endoribonuclease YbeY (151 aa).

Zn(2+) contacts are provided by His-108, His-112, and Asp-118.

Belongs to the endoribonuclease YbeY family. Zn(2+) serves as cofactor.

The protein localises to the cytoplasm. Single strand-specific metallo-endoribonuclease involved in late-stage 70S ribosome quality control and in maturation of the 3' terminus of the 16S rRNA. This Porphyromonas gingivalis (strain ATCC 33277 / DSM 20709 / CIP 103683 / JCM 12257 / NCTC 11834 / 2561) protein is Endoribonuclease YbeY.